Consider the following 150-residue polypeptide: MGNETVVVAETAGSIKVAVVVCLLRGQNVLLGRRRSSLGDSTFSLPSGHLEFGESFEECAARELKEETDLDIGKIELLTVTNNLFLDEAKPSQYVAVFMRAVLADPRQEPQNIEPEFCDGWGWYEWDNLPKPLFWPLDNVVQDGFNPFPT.

The region spanning 14 to 147 is the Nudix hydrolase domain; sequence SIKVAVVVCL…DNVVQDGFNP (134 aa). Residues 48-69 carry the Nudix box motif; the sequence is GHLEFGESFEECAARELKEETD. Mg(2+)-binding residues include E63 and E67.

This sequence belongs to the Nudix hydrolase family. Expressed in petals. Little or no expression in stamens, sepals or young leaves.

It localises to the cytoplasm. It catalyses the reaction (2E)-geranyl diphosphate + H2O = (2E)-geranyl phosphate + phosphate + H(+). Its function is as follows. Involved in a cytosolic pathway for the biosynthesis of free monoterpene alcohols that contribute to fragrance. Lacks terpene synthase activity, but has a diphosphohydrolase activity with geranyl diphosphate and farnesyl diphosphate as substrates. No activity with 8-oxo-dGTP and dGTP and unable to dephosphorylate geranyl phosphate to geraniol. The polypeptide is Geranyl diphosphate phosphohydrolase (Rosa hybrid cultivar).